The sequence spans 264 residues: uncharacterized protein (264 aa).

4 consecutive transmembrane segments (helical) span residues 43–63 (VVAA…LYLI), 68–88 (FLPS…LLGI), 96–116 (ILPA…LGCI), and 150–170 (LAAK…VLAV). Residues 216-247 (SYEDALKNSSQQPSTSSSSSSPPSRPPHSVYT) form a disordered region. The span at 224–237 (SSQQPSTSSSSSSP) shows a compositional bias: low complexity.

It localises to the membrane. This is an uncharacterized protein from Caenorhabditis elegans.